We begin with the raw amino-acid sequence, 78 residues long: Acyl carrier protein (78 aa).

One can recognise a Carrier domain in the interval 2 to 77 (SDIEQRVKQA…SAIDYVTKKL (76 aa)). O-(pantetheine 4'-phosphoryl)serine is present on Ser37.

This sequence belongs to the acyl carrier protein (ACP) family. 4'-phosphopantetheine is transferred from CoA to a specific serine of apo-ACP by AcpS. This modification is essential for activity because fatty acids are bound in thioester linkage to the sulfhydryl of the prosthetic group.

The protein localises to the cytoplasm. It functions in the pathway lipid metabolism; fatty acid biosynthesis. Carrier of the growing fatty acid chain in fatty acid biosynthesis. This Acinetobacter baumannii (strain AB307-0294) protein is Acyl carrier protein.